Reading from the N-terminus, the 1485-residue chain is Formin BNR1 (1485 aa).

Disordered stretches follow at residues 65–88, 226–248, and 549–575; these read HLPP…PTLH, HDDS…PTET, and ANTS…SFDE. In terms of domain architecture, GBD/FH3 spans 110–636; that stretch reads NQIPPEEIVD…HVTNESRVIG (527 aa). Residues 231-248 show a composition bias toward polar residues; sequence TSKLSIESGGSSGAPTET. The span at 553-564 shows a compositional bias: acidic residues; it reads LEEDELTPELED. Positions 660-734 form a coiled coil; that stretch reads ARRAVAESKM…EQLQSPNNTA (75 aa). Residues 746–874 are disordered; sequence GNGTVASLKD…GFMNASAPPP (129 aa). The FH2 domain occupies 953-1368; sequence VVPSIRPKNK…YEIRKKILED (416 aa). Coiled coils occupy residues 1240 to 1312 and 1351 to 1382; these read HNIS…GELN and QREE…ESAE. A disordered region spans residues 1447 to 1471; the sequence is LKRRMTTRKRTTDGETSPKSEQFMS.

Belongs to the formin homology family. BNI1 subfamily. As to quaternary structure, interacts with IQG1.

The protein localises to the bud neck. It is found in the cell septum. May organize microtubules by mediating spindle positioning and movement in the budding process. Required for cytokinesis and the maintenance of polarized hyphal growth. The polypeptide is Formin BNR1 (BNR1) (Candida albicans (strain SC5314 / ATCC MYA-2876) (Yeast)).